The following is a 155-amino-acid chain: Ribosomal RNA large subunit methyltransferase H (155 aa).

S-adenosyl-L-methionine contacts are provided by residues Leu-72, Gly-103, and 122–127 (LSPLTL).

The protein belongs to the RNA methyltransferase RlmH family. Homodimer.

Its subcellular location is the cytoplasm. The catalysed reaction is pseudouridine(1915) in 23S rRNA + S-adenosyl-L-methionine = N(3)-methylpseudouridine(1915) in 23S rRNA + S-adenosyl-L-homocysteine + H(+). In terms of biological role, specifically methylates the pseudouridine at position 1915 (m3Psi1915) in 23S rRNA. The chain is Ribosomal RNA large subunit methyltransferase H from Actinobacillus pleuropneumoniae serotype 5b (strain L20).